The following is a 75-amino-acid chain: Probable pilin MJ0431 (75 aa).

The propeptide occupies 1–15 (MGKMKILKKLLSKKG). Positions 16-24 (QLSMEVGVL) match the QXSXEXXXL motif.

The N-terminus is cleaved by the prepilin peptidase EppA, which recognizes the class III signal sequence.

The protein localises to the secreted. The protein resides in the cell surface. It is found in the fimbrium. This is Probable pilin MJ0431 from Methanocaldococcus jannaschii (strain ATCC 43067 / DSM 2661 / JAL-1 / JCM 10045 / NBRC 100440) (Methanococcus jannaschii).